The primary structure comprises 513 residues: V-type proton ATPase subunit B, kidney isoform (513 aa).

Residues 1 to 18 (MATTVDSRSSGFTGNSCD) are compositionally biased toward polar residues. The disordered stretch occupies residues 1–21 (MATTVDSRSSGFTGNSCDPGT). ATP is bound at residue Arg-394. The PDZ-binding motif lies at 510-513 (DTAL).

It belongs to the ATPase alpha/beta chains family. In terms of assembly, V-ATPase is a heteromultimeric enzyme made up of two complexes: the ATP-hydrolytic V1 complex and the proton translocation V0 complex. The V1 complex consists of three catalytic AB heterodimers that form a heterohexamer, three peripheral stalks each consisting of EG heterodimers, one central rotor including subunits D and F, and the regulatory subunits C and H. The proton translocation complex V0 consists of the proton transport subunit a, a ring of proteolipid subunits c9c'', rotary subunit d, subunits e and f, and the accessory subunits ATP6AP1/Ac45 and ATP6AP2/PRR. Forms a complex with NHERF1 and SCL4A7. In terms of tissue distribution, highly expressed in the kidney; found in early distal nephron, encompassing thick ascending limbs and distal convoluted tubules and in the alpha-intercalated cells of the cortical collecting ducts (at protein level). Expressed in the olfactory epithelium (at protein level). Expressed at lower levels in the testis.

It localises to the apical cell membrane. The protein resides in the basolateral cell membrane. Functionally, non-catalytic subunit of the V1 complex of vacuolar(H+)-ATPase (V-ATPase), a multisubunit enzyme composed of a peripheral complex (V1) that hydrolyzes ATP and a membrane integral complex (V0) that translocates protons. V-ATPase is responsible for acidifying and maintaining the pH of intracellular compartments and in some cell types, is targeted to the plasma membrane, where it is responsible for acidifying the extracellular environment. Essential for the proper assembly and activity of V-ATPase. In renal intercalated cells, mediates secretion of protons (H+) into the urine thereby ensuring correct urinary acidification. Required for optimal olfactory function by mediating the acidification of the nasal olfactory epithelium. The protein is V-type proton ATPase subunit B, kidney isoform (Atp6v1b1) of Mus musculus (Mouse).